The chain runs to 130 residues: Small ribosomal subunit protein eS17 (130 aa).

Residues 74–84 are compositionally biased toward basic and acidic residues; the sequence is QEEERERRDNY. A disordered region spans residues 74–97; the sequence is QEEERERRDNYMPEISTVDPSQLT.

This sequence belongs to the eukaryotic ribosomal protein eS17 family.

This is Small ribosomal subunit protein eS17 (rps-17) from Caenorhabditis elegans.